Here is a 342-residue protein sequence, read N- to C-terminus: MTPDPASALQHRKRRHIDVCLTDPVDYQTLTTGFERYQLPYNALTQTDLHSVDLGTEFMGSRLRAPVLIGAMTGGAALSGIINRNLAEAAQQLGVGMMLGSQRVMIDDAVAAESFDVRGVAPDVLVIGNIGLAQLQPSMVPALAAALDRVGANGLAVHTNPLQEAMQHNGDTDFSGSMSRLREVVDSLGYPVMLKEVGHGIGASAAAQLVDCPVAAVDVAGAGGTSWARIEQFVRYGEVRYPALAEWGIPTAQALTEVRGILPDVPLVASGGIRTGMDAAKALAMGAEVVAIARPLLAPAVESVGAVVDWLQRFIDELLVCLHGSGAANLSALRERGVTELP.

12–13 is a substrate binding site; it reads RK. FMN is bound by residues 71-73, S101, and N129; that span reads AMT. Substrate is bound at residue 101–103; it reads SQR. Q163 contributes to the substrate binding site. E164 serves as a coordination point for Mg(2+). FMN contacts are provided by residues K195, T225, 272–274, and 293–294; these read GIR and AR.

It belongs to the IPP isomerase type 2 family. As to quaternary structure, homooctamer. Dimer of tetramers. FMN serves as cofactor. It depends on NADPH as a cofactor. The cofactor is Mg(2+).

Its subcellular location is the cytoplasm. It catalyses the reaction isopentenyl diphosphate = dimethylallyl diphosphate. In terms of biological role, involved in the biosynthesis of isoprenoids. Catalyzes the 1,3-allylic rearrangement of the homoallylic substrate isopentenyl (IPP) to its allylic isomer, dimethylallyl diphosphate (DMAPP). In Mycolicibacterium gilvum (strain PYR-GCK) (Mycobacterium gilvum (strain PYR-GCK)), this protein is Isopentenyl-diphosphate delta-isomerase.